Consider the following 536-residue polypeptide: Cytochrome P450 monooxygenase phqM (536 aa).

Cysteine 464 contributes to the heme binding site.

It belongs to the cytochrome P450 family. The cofactor is heme.

Its pathway is alkaloid biosynthesis. In terms of biological role, cytochrome P450 monooxygenase; part of the gene cluster that mediates the biosynthesis of paraherquamide, a fungal indole alkaloid that belongs to a family of natural products containing a characteristic bicyclo[2.2.2]diazaoctane core. The first steps in the biosynthesis of paraherquamide is the production of the beta-methyl-proline precursor from L-isoleucine. They require oxidation of a terminally hydroxylated L-isoleucine to the corresponding aldehyde by enzymes which have still to be identified. Spontaneous cyclization and dehydration would yield the 4-methyl pyrolline-5-carboxylic acid, which is then reduced by the pyrroline-5-carboxylate reductase phqD leading to the beta-methyl-proline precursor. The next step of paraherquamide biosynthesis involves coupling of beta-methyl-proline and L-tryptophan by the bimodular NRPS phqB, to produce a monooxopiperazine intermediate. The reductase (R) domain of phqB utilizes NADPH for hydride transfer to reduce the thioester bond of the T domain-tethered linear dipeptide to a hemithioaminal intermediate, which spontaneously cleaves the C-S bond to release the aldehyde product. This compound undergoes spontaneous cyclization and dehydration to give a dienamine which is reverse prenylated at C-2 by the reverse prenyltransferase phqJ. The other prenyltransferase present in the cluster, phqI may be a redundant gene in the pathway. During biosynthetic assembly, the key step to produce the polycyclic core is catalyzed by the bifunctional reductase and intramolecular [4+2] Diels-Alderase, phqE, resulting in formation of the [2.2.2] diazaoctane intermediate preparaherquamide. Following formation of preparaherquamide, an indole 2,3-epoxidation-initiated pinacol-like rearrangement is catalyzed by the phqK FAD-dependent monooxygenase. The prenyltransferase phqA, the cytochrome P450 monooxygenase phqL, and the FAD-linked oxidoreductase phqH (or the cytochrome P450 monooxygenase phqM), are proposed to be involved in the formation of the pyran ring. The FAD-dependent monooxygenase phqK is likely responsible for generation of the spiro-oxindole, and the N-methylation is likely mediated by the phqN methyltransferase leading to the isolable natural product paraherquamide F. However, the order of these biosynthetic steps has still to be determined. In late-stage paraherquamide biosynthesis, the third P450 monooxygenase, phqO, is probably responsible for the C-14 hydroxylation, transforming paraherquamide F to paraherquamide G, and paraherquamide E to the final product paraherquamide A. The expansion from the 6-membered ring pyran (in paraherquamides F and G) to the 7-membered dioxepin ring (in paraherquamides A and E) represents a poorly understood but intriguing process that probably involves the 2-oxoglutarate-dependent dioxygenase phqC. Finally, the remaining members of the paraherquamide cluster, including phqI as well as phqM (or phqH), do not have a clearly prescribed role and appear to be redundant. The polypeptide is Cytochrome P450 monooxygenase phqM (Penicillium fellutanum).